We begin with the raw amino-acid sequence, 377 residues long: Chaperone protein DnaJ (377 aa).

In terms of domain architecture, J spans D4 to G69. Residues G135–E213 form a CR-type zinc finger. The Zn(2+) site is built by C148, C151, C165, C168, C187, C190, C201, and C204. 4 CXXCXGXG motif repeats span residues C148–G155, C165–G172, C187–G194, and C201–G208.

Belongs to the DnaJ family. In terms of assembly, homodimer. Requires Zn(2+) as cofactor.

The protein resides in the cytoplasm. In terms of biological role, participates actively in the response to hyperosmotic and heat shock by preventing the aggregation of stress-denatured proteins and by disaggregating proteins, also in an autonomous, DnaK-independent fashion. Unfolded proteins bind initially to DnaJ; upon interaction with the DnaJ-bound protein, DnaK hydrolyzes its bound ATP, resulting in the formation of a stable complex. GrpE releases ADP from DnaK; ATP binding to DnaK triggers the release of the substrate protein, thus completing the reaction cycle. Several rounds of ATP-dependent interactions between DnaJ, DnaK and GrpE are required for fully efficient folding. Also involved, together with DnaK and GrpE, in the DNA replication of plasmids through activation of initiation proteins. This chain is Chaperone protein DnaJ, found in Brucella ovis (strain ATCC 25840 / 63/290 / NCTC 10512).